The chain runs to 329 residues: MPIPMLPAHVPTIDISPLSGGDADDKKRVAQEINKACRESGFFYASHHGIDVQLLKDVVNEFHRTMTDEEKYDLAINAYNKNNPRTRNGYYMAVKGKKAVESWCYLNPSFSEDHPQIRSGTPMHEGNIWPDEKRHQRFRPFCEQYYRDVFSLSKVLMRGFALALGKPEDFFDASLSLADTLSAVTLIHYPYLEDYPPVKTGPDGTKLSFEDHLDVSMITVLFQTEVQNLQVETADGWQDLPTSGENFLVNCGTYMGYLTNDYFPAPNHRVKFINAERLSLPFFLHAGHTTVMEPFSPEDTRGKELNPPVRYGDYLQQASNALIAKNGQT.

Isopenicillin N is bound by residues arginine 87, tyrosine 91, and tyrosine 189. N-[(5S)-5-amino-5-carboxypentanoyl]-L-cysteinyl-D-valine-binding residues include arginine 87, tyrosine 91, tyrosine 189, histidine 212, and aspartate 214. Positions 180–286 (TLSAVTLIHY…RLSLPFFLHA (107 aa)) constitute a Fe2OG dioxygenase domain. Fe(2+) is bound by residues histidine 212, aspartate 214, and histidine 268. Arginine 277 is a binding site for 2-oxoglutarate. Residue serine 279 coordinates isopenicillin N. N-[(5S)-5-amino-5-carboxypentanoyl]-L-cysteinyl-D-valine is bound at residue serine 279.

This sequence belongs to the iron/ascorbate-dependent oxidoreductase family. Fe cation is required as a cofactor. L-ascorbate serves as cofactor.

It catalyses the reaction N-[(5S)-5-amino-5-carboxypentanoyl]-L-cysteinyl-D-valine + O2 = isopenicillin N + 2 H2O. Its pathway is antibiotic biosynthesis; penicillin G biosynthesis; penicillin G from L-alpha-aminoadipate and L-cysteine and L-valine: step 2/3. Functionally, removes, in the presence of oxygen, 4 hydrogen atoms from delta-L-(alpha-aminoadipyl)-L-cysteinyl-D-valine (ACV) to form the azetidinone and thiazolidine rings of isopenicillin. The sequence is that of Isopenicillin N synthase (pcbC) from Streptomyces griseus.